The sequence spans 288 residues: Acetyl-coenzyme A carboxylase carboxyl transferase subunit beta (288 aa).

A CoA carboxyltransferase N-terminal domain is found at 34–288 (LFAKCPACKH…HLVAFHGGGQ (255 aa)). The Zn(2+) site is built by Cys-38, Cys-41, Cys-56, and Cys-59. The C4-type zinc finger occupies 38 to 59 (CPACKHMIYKKDLGLAKICPTC).

This sequence belongs to the AccD/PCCB family. In terms of assembly, acetyl-CoA carboxylase is a heterohexamer composed of biotin carboxyl carrier protein (AccB), biotin carboxylase (AccC) and two subunits each of ACCase subunit alpha (AccA) and ACCase subunit beta (AccD). It depends on Zn(2+) as a cofactor.

It localises to the cytoplasm. The enzyme catalyses N(6)-carboxybiotinyl-L-lysyl-[protein] + acetyl-CoA = N(6)-biotinyl-L-lysyl-[protein] + malonyl-CoA. Its pathway is lipid metabolism; malonyl-CoA biosynthesis; malonyl-CoA from acetyl-CoA: step 1/1. In terms of biological role, component of the acetyl coenzyme A carboxylase (ACC) complex. Biotin carboxylase (BC) catalyzes the carboxylation of biotin on its carrier protein (BCCP) and then the CO(2) group is transferred by the transcarboxylase to acetyl-CoA to form malonyl-CoA. The sequence is that of Acetyl-coenzyme A carboxylase carboxyl transferase subunit beta from Streptococcus pyogenes serotype M1.